The chain runs to 256 residues: Pimeloyl-[acyl-carrier protein] methyl ester esterase (256 aa).

The AB hydrolase-1 domain occupies 15 to 242 (HLVLLHGWGL…AAHAPFISHP (228 aa)). Substrate-binding positions include tryptophan 22, 82–83 (SL), and 143–147 (FLALQ). The active-site Nucleophile is serine 82. Residues aspartate 207 and histidine 235 contribute to the active site. Residue histidine 235 participates in substrate binding.

It belongs to the AB hydrolase superfamily. Carboxylesterase BioH family. Monomer.

Its subcellular location is the cytoplasm. It carries out the reaction 6-carboxyhexanoyl-[ACP] methyl ester + H2O = 6-carboxyhexanoyl-[ACP] + methanol + H(+). It functions in the pathway cofactor biosynthesis; biotin biosynthesis. Functionally, the physiological role of BioH is to remove the methyl group introduced by BioC when the pimeloyl moiety is complete. It allows to synthesize pimeloyl-ACP via the fatty acid synthetic pathway through the hydrolysis of the ester bonds of pimeloyl-ACP esters. This is Pimeloyl-[acyl-carrier protein] methyl ester esterase from Salmonella choleraesuis (strain SC-B67).